We begin with the raw amino-acid sequence, 380 residues long: Protein Wnt-5a (380 aa).

The signal sequence occupies residues 1–35; sequence MKKSIGILSPGVALGTAGSAMSSKFFVMALAVFFS. Positions 36 to 61 are excised as a propeptide; it reads FAQVVIEANSWWSLGMNNPVQMSEVY. The cysteines at positions 104 and 115 are disulfide-linked. Asn114 and Asn120 each carry an N-linked (GlcNAc...) asparagine glycan. 10 disulfide bridges follow: Cys154–Cys162, Cys164–Cys182, Cys238–Cys252, Cys240–Cys247, Cys309–Cys340, Cys325–Cys335, Cys339–Cys379, Cys355–Cys370, Cys357–Cys367, and Cys362–Cys363. Residue Ser244 is the site of O-palmitoleoyl serine; by PORCN attachment. 2 N-linked (GlcNAc...) asparagine glycosylation sites follow: Asn312 and Asn326.

The protein belongs to the Wnt family. As to quaternary structure, forms a soluble 1:1 complex with AFM; this prevents oligomerization and is required for prolonged biological activity. The complex with AFM may represent the physiological form in body fluids. Homooligomer; disulfide-linked, leading to inactivation (in vitro). Interacts with PORCN. Interacts with WLS. Interacts with glypican GCP3. Interacts with PKD1 (via extracellular domain). Interacts with TMEM67. In terms of processing, glycosylation is necessary for secretion but not for activity. Post-translationally, palmitoleoylation is required for efficient binding to frizzled receptors. Depalmitoleoylation leads to Wnt signaling pathway inhibition. Proteolytic processing by TIKI1 and TIKI2 promotes oxidation and formation of large disulfide-bond oligomers, leading to inactivation of WNT5A.

The protein resides in the secreted. It is found in the extracellular space. The protein localises to the extracellular matrix. Its function is as follows. Ligand for members of the frizzled family of seven transmembrane receptors. Can activate or inhibit canonical Wnt signaling, depending on receptor context. In the presence of FZD4, activates beta-catenin signaling. In the presence of ROR2, inhibits the canonical Wnt pathway by promoting beta-catenin degradation through a GSK3-independent pathway which involves down-regulation of beta-catenin-induced reporter gene expression. Suppression of the canonical pathway allows chondrogenesis to occur. Inhibits tumor formation. Stimulates cell migration. Decreases proliferation, migration, invasiveness and clonogenicity of carcinoma cells and may act as a tumor suppressor. Mediates motility of melanoma cells. Required during embryogenesis for extension of the primary anterior-posterior axis and for outgrowth of limbs and the genital tubercle. Inhibits type II collagen expression in chondrocytes. The polypeptide is Protein Wnt-5a (Oryctolagus cuniculus (Rabbit)).